A 491-amino-acid polypeptide reads, in one-letter code: uncharacterized protein (491 aa).

266 to 273 (GIQGTGKS) is an ATP binding site.

It belongs to the AAA ATPase family. Highly divergent.

It is found in the plastid. The protein localises to the chloroplast. This is an uncharacterized protein from Porphyra purpurea (Red seaweed).